The sequence spans 644 residues: Acetolactate synthase 1, chloroplastic (644 aa).

A chloroplast-targeting transit peptide spans 1–43 (MATTAAAAAAALSAAATAKTGRKNHQRHHVLPARGRVGAAAVR). The tract at residues 47-67 (VSPVTPPSPAPPATPLRPWGP) is disordered. The span at 50 to 61 (VTPPSPAPPATP) shows a compositional bias: pro residues. Residue Glu-118 participates in thiamine diphosphate binding. Cys-138 and Cys-284 are disulfide-bonded. Residues Arg-220, 326–347 (HGTV…FGVR), and 369–388 (DIDP…ICAD) contribute to the FAD site. Residues 461 to 541 (QHQMWAAQYY…VKVMVLNNQH (81 aa)) form a thiamine pyrophosphate binding region. Mg(2+) contacts are provided by Asp-512 and Asn-539.

This sequence belongs to the TPP enzyme family. It depends on Mg(2+) as a cofactor. Thiamine diphosphate is required as a cofactor.

Its subcellular location is the plastid. The protein localises to the chloroplast. The enzyme catalyses 2 pyruvate + H(+) = (2S)-2-acetolactate + CO2. Its pathway is amino-acid biosynthesis; L-isoleucine biosynthesis; L-isoleucine from 2-oxobutanoate: step 1/4. It participates in amino-acid biosynthesis; L-valine biosynthesis; L-valine from pyruvate: step 1/4. The sequence is that of Acetolactate synthase 1, chloroplastic (ALS1) from Oryza sativa subsp. japonica (Rice).